We begin with the raw amino-acid sequence, 1088 residues long: RNA-directed RNA polymerase (1088 aa).

The region spanning 501–687 (LSYGDVTRFL…AKRYIAGGKI (187 aa)) is the RdRp catalytic domain.

The protein belongs to the reoviridae RNA-directed RNA polymerase family. In terms of assembly, interacts with VP3 (Potential). Interacts with VP2; this interaction activates VP1. Interacts with NSP5; this interaction is probably necessary for the formation of functional virus factories. Interacts with NSP2; this interaction is weak. It depends on Mg(2+) as a cofactor.

The protein localises to the virion. It catalyses the reaction RNA(n) + a ribonucleoside 5'-triphosphate = RNA(n+1) + diphosphate. RNA-directed RNA polymerase that is involved in both transcription and genome replication. Together with VP3 capping enzyme, forms an enzyme complex positioned near the channels situated at each of the five-fold vertices of the core. Following infection, the outermost layer of the virus is lost, leaving a double-layered particle (DLP) made up of the core and VP6 shell. VP1 then catalyzes the transcription of fully conservative plus-strand genomic RNAs that are extruded through the DLP's channels into the cytoplasm where they function as mRNAs for translation of viral proteins. One copy of each of the viral (+)RNAs is also recruited during core assembly, together with newly synthesized polymerase complexes and VP2. The polymerase of these novo-formed particles catalyzes the synthesis of complementary minus-strands leading to dsRNA formation. To do so, the polymerase specifically recognizes and binds 4 bases 5'-UGUG-3' in the conserved 3'-sequence of plus-strand RNA templates. VP2 presumably activates the autoinhibited VP1-RNA complex to coordinate packaging and genome replication. Once dsRNA synthesis is complete, the polymerase switches to the transcriptional mode, thus providing secondary transcription. This is RNA-directed RNA polymerase from Rotavirus A (strain RVA/SA11-Patton/G3P[X]) (RV-A).